The chain runs to 735 residues: FHF complex subunit HOOK-interacting protein 2B (735 aa).

A disordered region spans residues 183 to 229 (SSSTSDEAAEKDCSGSSSPERASSPSSSSSACSLLSRSGAHPVSSPQ). Residues 196 to 221 (SGSSSPERASSPSSSSSACSLLSRSG) are compositionally biased toward low complexity.

The protein belongs to the FHIP family.

In Danio rerio (Zebrafish), this protein is FHF complex subunit HOOK-interacting protein 2B (fhip2b).